A 132-amino-acid polypeptide reads, in one-letter code: Translation initiation factor 5A (132 aa).

The residue at position 36 (K36) is a Hypusine.

This sequence belongs to the eIF-5A family.

The protein resides in the cytoplasm. Functionally, functions by promoting the formation of the first peptide bond. This chain is Translation initiation factor 5A (eIF5A), found in Desulfurococcus amylolyticus (strain DSM 18924 / JCM 16383 / VKM B-2413 / 1221n) (Desulfurococcus kamchatkensis).